The sequence spans 185 residues: MKIIAGLGNPGQKYDKTKHNTGFMTMDHYLDKKGLTLNKDKFEGHWTKEKINGEDVIFLEPQTYMNESGRSVSQIANFFKVAPEDVLIIQDDMDMPIGKIRIRANGKSGGHNGIKSIIRDLGTEKFNRLKIGIRHPKNATVVSWVLTPFNDEQQKLMDDAFDTSVDIIDDFIAGRDSQYLMNKYN.

Residue Y14 coordinates tRNA. The Proton acceptor role is filled by H19. Positions 64, 66, and 112 each coordinate tRNA.

This sequence belongs to the PTH family. Monomer.

It localises to the cytoplasm. It carries out the reaction an N-acyl-L-alpha-aminoacyl-tRNA + H2O = an N-acyl-L-amino acid + a tRNA + H(+). Hydrolyzes ribosome-free peptidyl-tRNAs (with 1 or more amino acids incorporated), which drop off the ribosome during protein synthesis, or as a result of ribosome stalling. Its function is as follows. Catalyzes the release of premature peptidyl moieties from peptidyl-tRNA molecules trapped in stalled 50S ribosomal subunits, and thus maintains levels of free tRNAs and 50S ribosomes. The sequence is that of Peptidyl-tRNA hydrolase from Lactobacillus acidophilus (strain ATCC 700396 / NCK56 / N2 / NCFM).